A 316-amino-acid polypeptide reads, in one-letter code: Beta-ketoacyl-[acyl-carrier-protein] synthase III (316 aa).

Residues C112 and H243 contribute to the active site. An ACP-binding region spans residues 244 to 248 (QANLR). N273 is an active-site residue.

It belongs to the thiolase-like superfamily. FabH family. As to quaternary structure, homodimer.

It is found in the cytoplasm. It catalyses the reaction malonyl-[ACP] + acetyl-CoA + H(+) = 3-oxobutanoyl-[ACP] + CO2 + CoA. It functions in the pathway lipid metabolism; fatty acid biosynthesis. In terms of biological role, catalyzes the condensation reaction of fatty acid synthesis by the addition to an acyl acceptor of two carbons from malonyl-ACP. Catalyzes the first condensation reaction which initiates fatty acid synthesis and may therefore play a role in governing the total rate of fatty acid production. Possesses both acetoacetyl-ACP synthase and acetyl transacylase activities. Its substrate specificity determines the biosynthesis of branched-chain and/or straight-chain of fatty acids. This is Beta-ketoacyl-[acyl-carrier-protein] synthase III from Yersinia pestis (strain Pestoides F).